The chain runs to 471 residues: Ubiquitin-conjugating enzyme E2 variant 3 (471 aa).

The region spanning aspartate 2 to serine 145 is the UEV domain. Glycine 183–serine 211 serves as a coordination point for NAD(+).

In the N-terminal section; belongs to the ubiquitin-conjugating enzyme family. UEV subfamily. This sequence in the C-terminal section; belongs to the LDH/MDH superfamily. As to quaternary structure, homodimer.

Possible negative regulator of polyubiquitination. This is Ubiquitin-conjugating enzyme E2 variant 3 (uevld) from Danio rerio (Zebrafish).